Reading from the N-terminus, the 252-residue chain is 5'-nucleotidase SurE (252 aa).

Residues Asp-8, Asp-9, Ser-39, and Asn-91 each contribute to the a divalent metal cation site.

It belongs to the SurE nucleotidase family. Requires a divalent metal cation as cofactor.

Its subcellular location is the cytoplasm. The enzyme catalyses a ribonucleoside 5'-phosphate + H2O = a ribonucleoside + phosphate. Functionally, nucleotidase that shows phosphatase activity on nucleoside 5'-monophosphates. This chain is 5'-nucleotidase SurE, found in Bordetella avium (strain 197N).